The sequence spans 81 residues: Translational regulator CsrA (81 aa).

This sequence belongs to the CsrA/RsmA family. As to quaternary structure, homodimer; the beta-strands of each monomer intercalate to form a hydrophobic core, while the alpha-helices form wings that extend away from the core.

The protein localises to the cytoplasm. Its function is as follows. A translational regulator that binds mRNA to regulate translation initiation and/or mRNA stability. Usually binds in the 5'-UTR at or near the Shine-Dalgarno sequence preventing ribosome-binding, thus repressing translation. Its main target seems to be the major flagellin gene, while its function is anatagonized by FliW. The protein is Translational regulator CsrA of Desulforapulum autotrophicum (strain ATCC 43914 / DSM 3382 / VKM B-1955 / HRM2) (Desulfobacterium autotrophicum).